The chain runs to 1049 residues: Ataxin-2-like protein (1049 aa).

Met-1 is subject to N-acetylmethionine. The segment at 1–54 (MLKPQPPQQTSQPQQPPPTQQAVARRSPGGTSPPNGGLPGPLTATAAPPGPPAA) is disordered. Ser-27 carries the phosphoserine modification. Position 45 is a phosphothreonine (Thr-45). The tract at residues 96–119 (SVRGQTTGKGPPQSPVFEGVYNNS) is interaction with MPL. At Ser-109 the chain carries Phosphoserine. The residue at position 116 (Tyr-116) is a Phosphotyrosine. The Sm domain maps to 120 to 197 (RMLHFLTAVV…VLLVHFRNVD (78 aa)). Residue Lys-205 is modified to N6-acetyllysine. Residue Ser-236 is modified to Phosphoserine. Tyr-262 is modified (phosphotyrosine). Ser-304 carries the post-translational modification Phosphoserine. Tyr-307 is subject to Phosphotyrosine. A compositionally biased stretch (basic and acidic residues) spans 314–326 (ENDDGRTEEEKHS). 7 disordered regions span residues 314-522 (ENDD…RNLE), 554-573 (QFKLQPSSSPETGLDPFPSR), 578-704 (EAKG…LTAG), 736-772 (VSNSVPGQQGKYRGAKGSLPPQRSDQHQPASAPPMMQ), 824-852 (SNPRMLTSGSHPQAIVSSSTPQYPAAEQP), 868-944 (HATQ…SSFP), and 999-1049 (PQGH…PPGN). The span at 328–340 (VQRQGSGRESPSL) shows a compositional bias: polar residues. Residues Ser-333 and Ser-337 each carry the phosphoserine modification. Lys-346 participates in a covalent cross-link: Glycyl lysine isopeptide (Lys-Gly) (interchain with G-Cter in SUMO2). At Tyr-347 the chain carries Phosphotyrosine. Arg-359 is subject to Asymmetric dimethylarginine. The span at 361-378 (GVRCSSSRGGRPGLSSLP) shows a compositional bias: low complexity. Phosphoserine occurs at positions 389, 407, and 453. Residues 454-466 (PKSAAPAPVSASC) show a composition bias toward low complexity. Over residues 475–487 (VASSASIPVTSSV) the composition is skewed to polar residues. Phosphoserine occurs at positions 496 and 499. Residues 508–519 (DVKELPTKEPSR) show a composition bias toward basic and acidic residues. Ser-560, Ser-561, and Ser-562 each carry phosphoserine. Residues 578 to 587 (EAKGKEKEVD) show a composition bias toward basic and acidic residues. At Ser-597 the chain carries Phosphoserine. Thr-635 carries the post-translational modification Phosphothreonine. Residues Ser-637, Ser-677, Ser-683, and Ser-687 each carry the phosphoserine modification. Residues 681–697 (STSTPTSPGPRTHSTPS) are compositionally biased toward low complexity. Composition is skewed to polar residues over residues 824–845 (SNPRMLTSGSHPQAIVSSSTPQ) and 878–902 (QPATTPTGSQPQSQHAAPSPVQHQA). The segment covering 935 to 944 (SAQSPQSSFP) has biased composition (low complexity). The segment covering 1033–1042 (QVQSHPSQQL) has biased composition (polar residues).

This sequence belongs to the ataxin-2 family. As to quaternary structure, interacts with MPL/TPOR and EPOR and dissociates after ligand stimulation. Interacts with DDX6, G3BP, and ATXN2. Interacts with PRMT1. Interacts with CIC and ATXN1. Post-translationally, thrombopoietin triggers the phosphorylation on tyrosine residues in a way that is dependent on MPL C-terminal domain. In terms of processing, asymmetrically dimethylated. Probably methylated by PRMT1. In terms of tissue distribution, expressed in cerebellum.

The protein localises to the membrane. The protein resides in the cytoplasm. It localises to the nucleus speckle. It is found in the cytoplasmic granule. Involved in the regulation of stress granule and P-body formation. This is Ataxin-2-like protein (Atxn2l) from Mus musculus (Mouse).